We begin with the raw amino-acid sequence, 512 residues long: ATP synthase subunit alpha (512 aa).

169–176 contacts ATP; that stretch reads GDRQTGKT.

This sequence belongs to the ATPase alpha/beta chains family. As to quaternary structure, F-type ATPases have 2 components, CF(1) - the catalytic core - and CF(0) - the membrane proton channel. CF(1) has five subunits: alpha(3), beta(3), gamma(1), delta(1), epsilon(1). CF(0) has three main subunits: a(1), b(2) and c(9-12). The alpha and beta chains form an alternating ring which encloses part of the gamma chain. CF(1) is attached to CF(0) by a central stalk formed by the gamma and epsilon chains, while a peripheral stalk is formed by the delta and b chains.

The protein resides in the cell inner membrane. The catalysed reaction is ATP + H2O + 4 H(+)(in) = ADP + phosphate + 5 H(+)(out). Its function is as follows. Produces ATP from ADP in the presence of a proton gradient across the membrane. The alpha chain is a regulatory subunit. The chain is ATP synthase subunit alpha from Orientia tsutsugamushi (strain Ikeda) (Rickettsia tsutsugamushi).